The chain runs to 250 residues: 3-deoxy-manno-octulosonate cytidylyltransferase (250 aa).

This sequence belongs to the KdsB family.

It localises to the cytoplasm. The enzyme catalyses 3-deoxy-alpha-D-manno-oct-2-ulosonate + CTP = CMP-3-deoxy-beta-D-manno-octulosonate + diphosphate. Its pathway is nucleotide-sugar biosynthesis; CMP-3-deoxy-D-manno-octulosonate biosynthesis; CMP-3-deoxy-D-manno-octulosonate from 3-deoxy-D-manno-octulosonate and CTP: step 1/1. It participates in bacterial outer membrane biogenesis; lipopolysaccharide biosynthesis. Functionally, activates KDO (a required 8-carbon sugar) for incorporation into bacterial lipopolysaccharide in Gram-negative bacteria. This chain is 3-deoxy-manno-octulosonate cytidylyltransferase, found in Legionella pneumophila (strain Lens).